Here is a 213-residue protein sequence, read N- to C-terminus: Phosphate-specific transport system accessory protein PhoU homolog 2 (213 aa).

This sequence belongs to the PhoU family. As to quaternary structure, homodimer.

It localises to the cytoplasm. In terms of biological role, plays a role in the regulation of phosphate uptake. In this role, it may bind, possibly as a chaperone, to PhoR, PhoP or a PhoR-PhoP complex to promote dephosphorylation of phospho-PhoP, or inhibit formation of the PhoR-PhoP transitory complex. The chain is Phosphate-specific transport system accessory protein PhoU homolog 2 (phoU2) from Mycobacterium bovis (strain ATCC BAA-935 / AF2122/97).